We begin with the raw amino-acid sequence, 185 residues long: Peptidyl-tRNA hydrolase (185 aa).

Tyr-14 is a binding site for tRNA. Catalysis depends on His-19, which acts as the Proton acceptor. Residues Tyr-65, Asn-67, and Asn-113 each contribute to the tRNA site.

The protein belongs to the PTH family. In terms of assembly, monomer.

It is found in the cytoplasm. It catalyses the reaction an N-acyl-L-alpha-aminoacyl-tRNA + H2O = an N-acyl-L-amino acid + a tRNA + H(+). Functionally, hydrolyzes ribosome-free peptidyl-tRNAs (with 1 or more amino acids incorporated), which drop off the ribosome during protein synthesis, or as a result of ribosome stalling. Catalyzes the release of premature peptidyl moieties from peptidyl-tRNA molecules trapped in stalled 50S ribosomal subunits, and thus maintains levels of free tRNAs and 50S ribosomes. This Rickettsia bellii (strain OSU 85-389) protein is Peptidyl-tRNA hydrolase.